Reading from the N-terminus, the 416-residue chain is Type II methyltransferase M.PspPI (416 aa).

Positions 77-410 constitute an SAM-dependent MTase C5-type domain; that stretch reads YSLVELFAGA…KAIIRMLNAA (334 aa). C149 is a catalytic residue.

The protein belongs to the class I-like SAM-binding methyltransferase superfamily. C5-methyltransferase family.

The enzyme catalyses a 2'-deoxycytidine in DNA + S-adenosyl-L-methionine = a 5-methyl-2'-deoxycytidine in DNA + S-adenosyl-L-homocysteine + H(+). Its function is as follows. A methylase, recognizes the double-stranded sequence 5'-GGNCC-3', methylates C-4 on both strands, and protects the DNA from cleavage by the PspPI endonuclease. This Psychrobacter sp. (strain TA137) protein is Type II methyltransferase M.PspPI.